The chain runs to 344 residues: Dihydroorotate dehydrogenase (quinone) (344 aa).

FMN is bound by residues 65-69 (AGLDK) and Thr89. A substrate-binding site is contributed by Lys69. 114-118 (NRLGF) contacts substrate. FMN-binding residues include Asn145 and Asn178. Asn178 contributes to the substrate binding site. Catalysis depends on Ser181, which acts as the Nucleophile. Asn183 lines the substrate pocket. The FMN site is built by Lys223 and Thr251. 252–253 (NT) contributes to the substrate binding site. FMN is bound by residues Gly274, Gly303, and 324–325 (YT).

It belongs to the dihydroorotate dehydrogenase family. Type 2 subfamily. In terms of assembly, monomer. The cofactor is FMN.

It is found in the cell membrane. The catalysed reaction is (S)-dihydroorotate + a quinone = orotate + a quinol. It participates in pyrimidine metabolism; UMP biosynthesis via de novo pathway; orotate from (S)-dihydroorotate (quinone route): step 1/1. Catalyzes the conversion of dihydroorotate to orotate with quinone as electron acceptor. In Methylibium petroleiphilum (strain ATCC BAA-1232 / LMG 22953 / PM1), this protein is Dihydroorotate dehydrogenase (quinone).